Reading from the N-terminus, the 249-residue chain is Probable transcriptional regulatory protein OTT_1378 (249 aa).

Belongs to the TACO1 family.

It is found in the cytoplasm. This Orientia tsutsugamushi (strain Ikeda) (Rickettsia tsutsugamushi) protein is Probable transcriptional regulatory protein OTT_1378.